A 406-amino-acid polypeptide reads, in one-letter code: Arginine deiminase (406 aa).

Catalysis depends on C396, which acts as the Amidino-cysteine intermediate.

It belongs to the arginine deiminase family.

It is found in the cytoplasm. The catalysed reaction is L-arginine + H2O = L-citrulline + NH4(+). Its pathway is amino-acid degradation; L-arginine degradation via ADI pathway; carbamoyl phosphate from L-arginine: step 1/2. This Aliivibrio salmonicida (strain LFI1238) (Vibrio salmonicida (strain LFI1238)) protein is Arginine deiminase.